A 375-amino-acid polypeptide reads, in one-letter code: Succinyl-diaminopimelate desuccinylase (375 aa).

His-66 lines the Zn(2+) pocket. Residue Asp-68 is part of the active site. Zn(2+) is bound at residue Asp-99. The active-site Proton acceptor is the Glu-133. The Zn(2+) site is built by Glu-134, Glu-162, and His-348.

The protein belongs to the peptidase M20A family. DapE subfamily. Homodimer. Zn(2+) is required as a cofactor. Co(2+) serves as cofactor.

The enzyme catalyses N-succinyl-(2S,6S)-2,6-diaminopimelate + H2O = (2S,6S)-2,6-diaminopimelate + succinate. It functions in the pathway amino-acid biosynthesis; L-lysine biosynthesis via DAP pathway; LL-2,6-diaminopimelate from (S)-tetrahydrodipicolinate (succinylase route): step 3/3. Functionally, catalyzes the hydrolysis of N-succinyl-L,L-diaminopimelic acid (SDAP), forming succinate and LL-2,6-diaminopimelate (DAP), an intermediate involved in the bacterial biosynthesis of lysine and meso-diaminopimelic acid, an essential component of bacterial cell walls. The chain is Succinyl-diaminopimelate desuccinylase from Yersinia pseudotuberculosis serotype O:1b (strain IP 31758).